The sequence spans 547 residues: Chaperonin GroEL (547 aa).

ATP contacts are provided by residues 30 to 33, lysine 51, 87 to 91, glycine 415, and aspartate 495; these read TLGP and DGTTT. The tract at residues 526 to 547 is disordered; it reads KKDTPVPPMPGGGMGGMGGMDF. The span at 536–547 shows a compositional bias: gly residues; sequence GGGMGGMGGMDF.

This sequence belongs to the chaperonin (HSP60) family. Forms a cylinder of 14 subunits composed of two heptameric rings stacked back-to-back. Interacts with the co-chaperonin GroES.

The protein localises to the cytoplasm. The enzyme catalyses ATP + H2O + a folded polypeptide = ADP + phosphate + an unfolded polypeptide.. Together with its co-chaperonin GroES, plays an essential role in assisting protein folding. The GroEL-GroES system forms a nano-cage that allows encapsulation of the non-native substrate proteins and provides a physical environment optimized to promote and accelerate protein folding. This chain is Chaperonin GroEL, found in Bartonella henselae (strain ATCC 49882 / DSM 28221 / CCUG 30454 / Houston 1) (Rochalimaea henselae).